Reading from the N-terminus, the 274-residue chain is Thiamine kinase (274 aa).

The protein belongs to the thiamine kinase family.

It catalyses the reaction thiamine + ATP = thiamine phosphate + ADP + H(+). It participates in cofactor biosynthesis; thiamine diphosphate biosynthesis; thiamine phosphate from thiamine: step 1/1. Its function is as follows. Catalyzes the ATP-dependent phosphorylation of thiamine to thiamine phosphate. Is involved in thiamine salvage. This chain is Thiamine kinase, found in Escherichia coli O45:K1 (strain S88 / ExPEC).